A 910-amino-acid chain; its full sequence is Protein translocase subunit SecA (910 aa).

ATP is bound by residues glutamine 86, 104-108 (GEGKT), and aspartate 499. Residues cysteine 894, cysteine 896, cysteine 905, and histidine 906 each coordinate Zn(2+).

This sequence belongs to the SecA family. As to quaternary structure, monomer and homodimer. Part of the essential Sec protein translocation apparatus which comprises SecA, SecYEG and auxiliary proteins SecDF-YajC and YidC. Requires Zn(2+) as cofactor.

It localises to the cell inner membrane. It is found in the cytoplasm. The enzyme catalyses ATP + H2O + cellular proteinSide 1 = ADP + phosphate + cellular proteinSide 2.. Part of the Sec protein translocase complex. Interacts with the SecYEG preprotein conducting channel. Has a central role in coupling the hydrolysis of ATP to the transfer of proteins into and across the cell membrane, serving both as a receptor for the preprotein-SecB complex and as an ATP-driven molecular motor driving the stepwise translocation of polypeptide chains across the membrane. This chain is Protein translocase subunit SecA, found in Rickettsia bellii (strain RML369-C).